Reading from the N-terminus, the 316-residue chain is tRNA methyltransferase 10 homolog B (316 aa).

The stretch at 73-98 (EKIVAAKKSKRKQEKERRKANRVENS) forms a coiled coil. The disordered stretch occupies residues 77 to 96 (AAKKSKRKQEKERRKANRVE). Residues 113–310 (IKERLLEAKH…KGVSSRKGYV (198 aa)) form the SAM-dependent MTase TRM10-type domain.

Belongs to the class IV-like SAM-binding methyltransferase superfamily. TRM10 family.

It carries out the reaction guanosine(9) in tRNA + S-adenosyl-L-methionine = N(1)-methylguanosine(9) in tRNA + S-adenosyl-L-homocysteine + H(+). Its function is as follows. S-adenosyl-L-methionine-dependent guanine N(1)-methyltransferase that catalyzes the formation of N(1)-methylguanine at position 9 (m1G9) in tRNAs. Probably not able to catalyze formation of N(1)-methyladenine at position 9 (m1A9) in tRNAs. The protein is tRNA methyltransferase 10 homolog B (TRMT10B) of Bos taurus (Bovine).